The primary structure comprises 326 residues: Homocysteine S-methyltransferase 1 (326 aa).

The Hcy-binding domain maps to 9–323 (LLEDLIEKCG…STIKAISRDL (315 aa)). Zn(2+)-binding residues include C241, C308, and C309.

Requires Zn(2+) as cofactor. Expressed in roots, young leaves, florets and flowers. Not detected in old leaves.

It catalyses the reaction S-methyl-L-methionine + L-homocysteine = 2 L-methionine + H(+). Its activity is regulated as follows. Inhibited by L-methionine. In terms of biological role, catalyzes methyl transfer from S-methylmethionine to homocysteine. The highest preference is for DL-homocysteine &gt;&gt; DL-cysteine. Has no selenocysteine methyltransferase activity. The protein is Homocysteine S-methyltransferase 1 (HMT1) of Brassica oleracea var. italica (Broccoli).